A 206-amino-acid chain; its full sequence is Thymidylate kinase (206 aa).

10–17 (GVDGVGKT) lines the ATP pocket.

It belongs to the thymidylate kinase family.

It carries out the reaction dTMP + ATP = dTDP + ADP. Phosphorylation of dTMP to form dTDP in both de novo and salvage pathways of dTTP synthesis. This is Thymidylate kinase from Bifidobacterium longum (strain NCC 2705).